The chain runs to 182 residues: MTTIVSVRRNNKVVIAGDGQVSLGNTVMKGNARKVRRLYNNKVLAGFAGGTADAFTLFEKFESKLQMHQGHLTKAAVELAKDWRSDRALRKLEALLAVADETASLIITGNGDVVQPENDLIAIGSGGNFAQAAATALLENTDLDAREIAEKSLNIAGDICVFTNHHHTIEELESTVELPKPE.

Thr2 is an active-site residue. Na(+) is bound by residues Gly157, Cys160, and Thr163.

The protein belongs to the peptidase T1B family. HslV subfamily. In terms of assembly, a double ring-shaped homohexamer of HslV is capped on each side by a ring-shaped HslU homohexamer. The assembly of the HslU/HslV complex is dependent on binding of ATP.

The protein resides in the cytoplasm. It catalyses the reaction ATP-dependent cleavage of peptide bonds with broad specificity.. With respect to regulation, allosterically activated by HslU binding. Its function is as follows. Protease subunit of a proteasome-like degradation complex believed to be a general protein degrading machinery. The sequence is that of ATP-dependent protease subunit HslV from Vibrio atlanticus (strain LGP32) (Vibrio splendidus (strain Mel32)).